The chain runs to 73 residues: Beta-defensin 108B (73 aa).

An N-terminal signal peptide occupies residues 1–22 (MRIAVLLFAIFFFMSQVLPARG). Disulfide bonds link Cys28–Cys55, Cys35–Cys49, and Cys39–Cys56.

Belongs to the beta-defensin family. As to expression, specifically expressed in testis. Low expression is detected also in liver.

Its subcellular location is the secreted. In terms of biological role, has antibacterial activity. The sequence is that of Beta-defensin 108B (DEFB108B) from Homo sapiens (Human).